The following is a 203-amino-acid chain: ADP-ribosylation factor-like protein 6-interacting protein 1 (203 aa).

Topologically, residues 1–41 (MAEGDNRSTNLLAAETASLEEQLQGWGEVMLMADKVLRWER) are cytoplasmic. Residues 42-62 (AWFPPAIMGVVSLVFLIIYYL) traverse the membrane as a helical segment. Over 63-65 (DPS) the chain is Lumenal. A helical transmembrane segment spans residues 66-86 (VLSGVSCFVMFLCLADYLVPI). Over 87-133 (LAPRIFGSNKWTTEQQQRFHEICSNLVKTRRRAVGWWKRLFTLKEEK) the chain is Cytoplasmic. Residues 134 to 175 (PKMYFMTMIVSLAAVAWVGQQVHNLLLTYLIVTSLLLLPGLN) traverse the membrane as a helical segment. At 176–203 (QHGIILKYIGMAKREINKLLKQKEKKNE) the chain is on the lumenal side.

Belongs to the ARL6ip family. In terms of assembly, homooligomer. Heterodimer with ARL6IP5. Interacts with ARL6. Interacts with TMEM33. Interacts with ATL1. In terms of tissue distribution, expressed in all hematopoietic cell lineages, but the highest level of expression is found in early myeloid progenitor cells. Expressed in brain, bone marrow, thymus and lung. Expressed at low level in liver, kidney and spleen. Not detected in heart.

The protein resides in the endomembrane system. The protein localises to the endoplasmic reticulum membrane. It localises to the endoplasmic reticulum. Positively regulates SLC1A1/EAAC1-mediated glutamate transport by increasing its affinity for glutamate in a PKC activity-dependent manner. Promotes the catalytic efficiency of SLC1A1/EAAC1 probably by reducing its interaction with ARL6IP5, a negative regulator of SLC1A1/EAAC1-mediated glutamate transport. Plays a role in the formation and stabilization of endoplasmic reticulum tubules. Negatively regulates apoptosis, possibly by modulating the activity of caspase-9 (CASP9). Inhibits cleavage of CASP9-dependent substrates and downstream markers of apoptosis but not CASP9 itself. May be involved in protein transport, membrane trafficking, or cell signaling during hematopoietic maturation. This chain is ADP-ribosylation factor-like protein 6-interacting protein 1 (ARL6IP1), found in Homo sapiens (Human).